A 78-amino-acid polypeptide reads, in one-letter code: Mitotic-spindle organizing protein 1 (78 aa).

The residue at position 2 (Ala2) is an N-acetylalanine.

Belongs to the MOZART1 family. In terms of assembly, associates with the gamma-tubulin ring complex (gTuRC) consisting of TUBGCP2, TUBGCP3, TUBGCP4, TUBGCP5 and TUBGCP6 and gamma-tubulin TUBG1 or TUBG2; within the complex, interacts with TUBGCP3 and TUBGCP6 to form a luminal bridge with actin that stabilizes the initial structure during complex assembly. Interacts with TUBG1.

The protein resides in the cytoplasm. It localises to the cytoskeleton. It is found in the microtubule organizing center. Its subcellular location is the centrosome. The protein localises to the spindle. Functionally, required for the recruitment and the assembly of the gamma-tubulin ring complex (gTuRC) at the centrosome. The gTuRC regulates the minus-end nucleation of alpha-beta tubulin heterodimers that grow into microtubule protafilaments, a critical step in centrosome duplication and spindle formation. This is Mitotic-spindle organizing protein 1 (Mzt1) from Mus musculus (Mouse).